Reading from the N-terminus, the 203-residue chain is Small ribosomal subunit protein uS4 (203 aa).

Residues 93 to 154 enclose the S4 RNA-binding domain; that stretch reads RRLDNVVFRA…KSRNMDAVTD (62 aa).

The protein belongs to the universal ribosomal protein uS4 family. In terms of assembly, part of the 30S ribosomal subunit. Contacts protein S5. The interaction surface between S4 and S5 is involved in control of translational fidelity.

Functionally, one of the primary rRNA binding proteins, it binds directly to 16S rRNA where it nucleates assembly of the body of the 30S subunit. With S5 and S12 plays an important role in translational accuracy. The protein is Small ribosomal subunit protein uS4 of Chlorobium luteolum (strain DSM 273 / BCRC 81028 / 2530) (Pelodictyon luteolum).